We begin with the raw amino-acid sequence, 224 residues long: UPF0173 metal-dependent hydrolase Ta0764 (224 aa).

Belongs to the UPF0173 family.

In Thermoplasma acidophilum (strain ATCC 25905 / DSM 1728 / JCM 9062 / NBRC 15155 / AMRC-C165), this protein is UPF0173 metal-dependent hydrolase Ta0764.